An 896-amino-acid chain; its full sequence is Probable sodium/sulfate cotransporter 3 (896 aa).

Helical transmembrane passes span 1–21 (MAAIGWPGIVAIISVAISFII), 47–69 (IITVAKAAAGYGNTGLLTVIFLY), 106–126 (VMVLSAFLNNTPCVTFMIPIL), 140–160 (LLIPLSYAAVLGGTCTSIGTS), and 186–206 (MFDIAPYGVPYALMGFVFIIL). 4 RCK C-terminal domains span residues 212–296 (LPGN…EFGL), 319–404 (TAFH…FKIN), 408–493 (LRFV…FPGL), and 499–586 (EQVD…KAFV). The next 7 helical transmembrane spans lie at 602–622 (MAIGVLLVVGMVLTQIVGGLK), 626–646 (YIHLWPAAVLTAALMLLTGCM), 654–674 (AIMWDVYLTIAAAFGVSAALE), 685–705 (AIISIGKSIGGDGPALIAIYV), 734–754 (LKIPAVDISVAIMLGASAGFI), 776–796 (FATIGAPFQIWLMVVASFILC), and 804–824 (VWIATWSITAFIVFVPALLTL). The segment at 857–881 (RAQSFGGKAMSVGSTESRTDGSSTP) is disordered. Residues 868 to 881 (VGSTESRTDGSSTP) are compositionally biased toward polar residues.

This sequence belongs to the divalent anion:Na+ symporter (DASS) superfamily. Na+/sulfate symporter (TC 2.A.47.4) family.

The protein resides in the cell membrane. Functionally, na(+)/sulfate cotransporter with a probable low-affinity for sulfate. The protein is Probable sodium/sulfate cotransporter 3 (SLT3) of Chlamydomonas reinhardtii (Chlamydomonas smithii).